The following is a 318-amino-acid chain: Probable metal transport system membrane protein CT_070 (318 aa).

10 consecutive transmembrane segments (helical) span residues methionine 1 to phenylalanine 21, isoleucine 39 to valine 59, alanine 64 to phenylalanine 84, glutamine 94 to isoleucine 114, alanine 124 to leucine 144, isoleucine 170 to cysteine 190, isoleucine 196 to leucine 216, alanine 226 to isoleucine 246, glutamate 252 to serine 272, and threonine 285 to cysteine 305.

This sequence belongs to the ABC-3 integral membrane protein family.

It is found in the cell inner membrane. Functionally, part of an ATP-driven transport system CT_067/CT_068/CT_069/CT_070 for a metal. The protein is Probable metal transport system membrane protein CT_070 of Chlamydia trachomatis serovar D (strain ATCC VR-885 / DSM 19411 / UW-3/Cx).